Reading from the N-terminus, the 467-residue chain is Dimethylamine methyltransferase MtbB1 (467 aa).

Pyrrolysine 356 is a non-standard amino acid (pyrrolysine).

Belongs to the dimethylamine methyltransferase family.

The catalysed reaction is Co(I)-[dimethylamine-specific corrinoid protein] + dimethylamine + H(+) = methyl-Co(III)-[dimethylamine-specific corrinoid protein] + methylamine. The protein operates within one-carbon metabolism; methanogenesis from dimethylamine. Functionally, catalyzes the transfer of a methyl group from dimethylamine to the corrinoid cofactor of MtbC. This Methanosarcina acetivorans (strain ATCC 35395 / DSM 2834 / JCM 12185 / C2A) protein is Dimethylamine methyltransferase MtbB1 (mtbB1).